Reading from the N-terminus, the 166-residue chain is SPbeta prophage-derived uncharacterized protein YomO (166 aa).

The protein is SPbeta prophage-derived uncharacterized protein YomO (yomO) of Bacillus subtilis (strain 168).